The sequence spans 396 residues: Acetate kinase (396 aa).

Residue N8 coordinates Mg(2+). An ATP-binding site is contributed by K15. R89 contacts substrate. D146 (proton donor/acceptor) is an active-site residue. ATP is bound by residues 206–210, 283–285, and 331–335; these read HIGNG, DMR, and GVGEN. E383 contacts Mg(2+).

This sequence belongs to the acetokinase family. Homodimer. Mg(2+) serves as cofactor. It depends on Mn(2+) as a cofactor.

It is found in the cytoplasm. The catalysed reaction is acetate + ATP = acetyl phosphate + ADP. It participates in metabolic intermediate biosynthesis; acetyl-CoA biosynthesis; acetyl-CoA from acetate: step 1/2. Functionally, catalyzes the formation of acetyl phosphate from acetate and ATP. Can also catalyze the reverse reaction. The polypeptide is Acetate kinase (Streptococcus pneumoniae (strain ATCC 700669 / Spain 23F-1)).